Reading from the N-terminus, the 214-residue chain is Probable transaldolase (214 aa).

K83 serves as the catalytic Schiff-base intermediate with substrate.

The protein belongs to the transaldolase family. Type 3B subfamily.

Its subcellular location is the cytoplasm. The catalysed reaction is D-sedoheptulose 7-phosphate + D-glyceraldehyde 3-phosphate = D-erythrose 4-phosphate + beta-D-fructose 6-phosphate. Its pathway is carbohydrate degradation; pentose phosphate pathway; D-glyceraldehyde 3-phosphate and beta-D-fructose 6-phosphate from D-ribose 5-phosphate and D-xylulose 5-phosphate (non-oxidative stage): step 2/3. Functionally, transaldolase is important for the balance of metabolites in the pentose-phosphate pathway. The polypeptide is Probable transaldolase (Leptospira interrogans serogroup Icterohaemorrhagiae serovar copenhageni (strain Fiocruz L1-130)).